Consider the following 190-residue polypeptide: Peptidyl-tRNA hydrolase (190 aa).

Residue Tyr14 participates in tRNA binding. His19 functions as the Proton acceptor in the catalytic mechanism. Residues Tyr64, Asn66, and Asn112 each contribute to the tRNA site.

It belongs to the PTH family. As to quaternary structure, monomer.

The protein resides in the cytoplasm. The catalysed reaction is an N-acyl-L-alpha-aminoacyl-tRNA + H2O = an N-acyl-L-amino acid + a tRNA + H(+). In terms of biological role, hydrolyzes ribosome-free peptidyl-tRNAs (with 1 or more amino acids incorporated), which drop off the ribosome during protein synthesis, or as a result of ribosome stalling. Functionally, catalyzes the release of premature peptidyl moieties from peptidyl-tRNA molecules trapped in stalled 50S ribosomal subunits, and thus maintains levels of free tRNAs and 50S ribosomes. This is Peptidyl-tRNA hydrolase from Chlorobium luteolum (strain DSM 273 / BCRC 81028 / 2530) (Pelodictyon luteolum).